Here is a 136-residue protein sequence, read N- to C-terminus: Mediator of RNA polymerase II transcription subunit 22 (136 aa).

Belongs to the Mediator complex subunit 22 family. As to quaternary structure, component of the Mediator complex.

The protein resides in the nucleus. Its function is as follows. Component of the Mediator complex, a coactivator involved in the regulated transcription of nearly all RNA polymerase II-dependent genes. Mediator functions as a bridge to convey information from gene-specific regulatory proteins to the basal RNA polymerase II transcription machinery. Mediator is recruited to promoters by direct interactions with regulatory proteins and serves as a scaffold for the assembly of a functional preinitiation complex with RNA polymerase II and the general transcription factors. The polypeptide is Mediator of RNA polymerase II transcription subunit 22 (med22) (Schizosaccharomyces pombe (strain 972 / ATCC 24843) (Fission yeast)).